We begin with the raw amino-acid sequence, 712 residues long: Golgin candidate 3 (712 aa).

The segment at 23–49 (DEEEDDLHKYGSANGVSNSDRRNSSGF) is disordered. Residues 36–49 (NGVSNSDRRNSSGF) show a composition bias toward polar residues. The stretch at 65-134 (AHHEIERYKA…LKEARTDISR (70 aa)) forms a coiled coil. Positions 135-150 (GSNNYAIKGNNDQSPN) are enriched in polar residues. Disordered regions lie at residues 135-176 (GSNN…TDSF) and 306-347 (ESRK…MEQS). Coiled-coil stretches lie at residues 197-313 (QATE…LTNS), 340-558 (GKEE…LNRM), and 659-690 (LKDA…QEAA). The span at 328–344 (STLDKEKPESFPGKEEM) shows a compositional bias: basic and acidic residues. One can recognise a GRIP domain in the interval 557–608 (RMSMESDYLVDRRIVIKLLVTYFQKNHNKEVLDLMVRMLGFSEEDKERIGAA). The interval 666–712 (ERREAEEAAASKAKQDSERTRQEAALHDSEFSTVPLRSSESNQRLSR) is disordered. Residues 678-695 (AKQDSERTRQEAALHDSE) show a composition bias toward basic and acidic residues. Over residues 696–712 (FSTVPLRSSESNQRLSR) the composition is skewed to polar residues.

As to quaternary structure, interacts with ARF1; preferentially with the active form of the protein.

It localises to the golgi apparatus. The protein resides in the endosome. Its function is as follows. Golgi matrix protein playing a role in tethering of vesicles to Golgi membranes and in maintaining the overall structure of the Golgi apparatus. The polypeptide is Golgin candidate 3 (GC3) (Arabidopsis thaliana (Mouse-ear cress)).